We begin with the raw amino-acid sequence, 296 residues long: Transposase for insertion sequence element IST2 (296 aa).

The protein belongs to the transposase mutator family.

Its function is as follows. Required for the transposition of the insertion element. In Acidithiobacillus ferrooxidans (Thiobacillus ferrooxidans), this protein is Transposase for insertion sequence element IST2.